The following is a 1115-amino-acid chain: Integrin alpha-PS3 (1115 aa).

An N-terminal signal peptide occupies residues 1–24; that stretch reads MNAESTMFPHIFLALLALISHIEA. Residues 25 to 1054 lie on the Extracellular side of the membrane; that stretch reads FNFMPRPSRV…PNIISKHQET (1030 aa). FG-GAP repeat units follow at residues 39-99, 113-174, 193-246, 278-335, 336-397, 398-453, and 460-522; these read KHLK…VCSP, SEYT…STPQ, DNGN…VDNP, IPTP…GKSI, HKYH…FNFE, RQIL…GLRD, and DAPS…SESR. N-linked (GlcNAc...) asparagine glycans are attached at residues Asn-46, Asn-82, and Asn-166. N-linked (GlcNAc...) asparagine glycosylation is present at Asn-438. N-linked (GlcNAc...) asparagine glycans are attached at residues Asn-696, Asn-845, Asn-868, and Asn-964. The helical transmembrane segment at 1055 to 1075 threads the bilayer; that stretch reads GLPIWIIIVSVIGGLLLLSAI. Over 1076 to 1115 the chain is Cytoplasmic; the sequence is SYLLYKFGFFNRTKKDELDRLVQQNPVEPEAENLNSGGNN.

This sequence belongs to the integrin alpha chain family. Heterodimer of an alpha and a beta subunit. The alpha subunit is composed of a heavy and a light chain linked by a disulfide bond. Interacts with mys/beta-PS and Itgbn. In terms of tissue distribution, expressed in embryonic and larval hemocytes (at protein level). Expressed in tissues undergoing invagination, tissue movement and morphogenesis such as salivary gland, trachea, midgut endoderm, dorsal vessel, midline of the ventral nerve cord, amnioserosa and the amnioproctodeal invagination. Expressed in the mushroom body neuropil, brain areas that contain mushroom body processes in synaptic contact with other neurons. In egg chambers, expressed in border cells, in stretch cells and in dorsal appendage primordia.

The protein resides in the apical cell membrane. The protein localises to the lateral cell membrane. Its subcellular location is the cytoplasm. Functionally, integrin alpha-PS3/beta-PS is a receptor for laminin. Also binds to wb. Important during embryogenesis for the development of the trachea, dorsal vessel and salivary gland, as well as for dorsal closure. Required for short-term memory processes. Minor involvement in the establishment of the oocyte anterior-posterior length. Plays a role in timely border cell migration during oogenesis, probably mediated by JNK signaling. Integrin alpha-PS3/Itgbn is required for effective phagocytosis of apoptotic cells during embryonic development and for the phagocytic elimination of S.aureus by mediating the binding of S.aureus peptidoglycan to larval hemocytes, which probably activates a signaling pathway involving Rac1 and Rac2. Integrin alpha-PS3/Itgbn also regulates Fak activity during neuromuscular junction (NMJ) growth and is required for its activation in presynapsis of NMJs. Seems to be dispensable for major morphogenetic processes. This is Integrin alpha-PS3 (scb) from Drosophila melanogaster (Fruit fly).